Consider the following 151-residue polypeptide: Putative superoxide dismutase [Cu-Zn] (151 aa).

His43, His45, and His60 together coordinate Cu cation. Residues Cys54 and Cys144 are joined by a disulfide bond. Zn(2+) is bound by residues His60, His68, His77, and Asp80. His118 serves as a coordination point for Cu cation.

Belongs to the Cu-Zn superoxide dismutase family. Cu cation serves as cofactor. Requires Zn(2+) as cofactor.

The catalysed reaction is 2 superoxide + 2 H(+) = H2O2 + O2. In terms of biological role, nonessential for normal virus replication. Could be either non-functional or with a low activity. The polypeptide is Putative superoxide dismutase [Cu-Zn] (SOD) (Lepidoptera (butterflies and moths)).